The chain runs to 75 residues: uncharacterized protein (75 aa).

This sequence belongs to the HSBP1 family.

This is an uncharacterized protein from Schizosaccharomyces pombe (strain 972 / ATCC 24843) (Fission yeast).